A 617-amino-acid chain; its full sequence is Probable Xaa-Pro aminopeptidase P (617 aa).

Mn(2+)-binding residues include Asp-414, Asp-425, Glu-523, and Glu-537.

It belongs to the peptidase M24B family. It depends on Mn(2+) as a cofactor.

It catalyses the reaction Release of any N-terminal amino acid, including proline, that is linked to proline, even from a dipeptide or tripeptide.. Catalyzes the removal of a penultimate prolyl residue from the N-termini of peptides. The protein is Probable Xaa-Pro aminopeptidase P (AMPP) of Colletotrichum graminicola (strain M1.001 / M2 / FGSC 10212) (Maize anthracnose fungus).